Here is a 553-residue protein sequence, read N- to C-terminus: Arginine--tRNA ligase (553 aa).

The 'HIGH' region signature appears at 122 to 132 (ANPTGFLHVGH).

It belongs to the class-I aminoacyl-tRNA synthetase family. In terms of assembly, monomer.

It is found in the cytoplasm. The enzyme catalyses tRNA(Arg) + L-arginine + ATP = L-arginyl-tRNA(Arg) + AMP + diphosphate. In Mesoplasma florum (strain ATCC 33453 / NBRC 100688 / NCTC 11704 / L1) (Acholeplasma florum), this protein is Arginine--tRNA ligase.